The following is a 313-amino-acid chain: 4-hydroxy-3-methylbut-2-enyl diphosphate reductase (313 aa).

C12 contributes to the [4Fe-4S] cluster binding site. Positions 41 and 74 each coordinate (2E)-4-hydroxy-3-methylbut-2-enyl diphosphate. Dimethylallyl diphosphate-binding residues include H41 and H74. Isopentenyl diphosphate-binding residues include H41 and H74. C96 is a binding site for [4Fe-4S] cluster. H124 is a (2E)-4-hydroxy-3-methylbut-2-enyl diphosphate binding site. A dimethylallyl diphosphate-binding site is contributed by H124. Position 124 (H124) interacts with isopentenyl diphosphate. The active-site Proton donor is E126. T164 is a (2E)-4-hydroxy-3-methylbut-2-enyl diphosphate binding site. C194 contributes to the [4Fe-4S] cluster binding site. (2E)-4-hydroxy-3-methylbut-2-enyl diphosphate-binding residues include S222, S223, N224, and S266. Dimethylallyl diphosphate contacts are provided by S222, S223, N224, and S266. Residues S222, S223, N224, and S266 each contribute to the isopentenyl diphosphate site.

It belongs to the IspH family. [4Fe-4S] cluster is required as a cofactor.

The catalysed reaction is isopentenyl diphosphate + 2 oxidized [2Fe-2S]-[ferredoxin] + H2O = (2E)-4-hydroxy-3-methylbut-2-enyl diphosphate + 2 reduced [2Fe-2S]-[ferredoxin] + 2 H(+). It catalyses the reaction dimethylallyl diphosphate + 2 oxidized [2Fe-2S]-[ferredoxin] + H2O = (2E)-4-hydroxy-3-methylbut-2-enyl diphosphate + 2 reduced [2Fe-2S]-[ferredoxin] + 2 H(+). The protein operates within isoprenoid biosynthesis; dimethylallyl diphosphate biosynthesis; dimethylallyl diphosphate from (2E)-4-hydroxy-3-methylbutenyl diphosphate: step 1/1. It participates in isoprenoid biosynthesis; isopentenyl diphosphate biosynthesis via DXP pathway; isopentenyl diphosphate from 1-deoxy-D-xylulose 5-phosphate: step 6/6. In terms of biological role, catalyzes the conversion of 1-hydroxy-2-methyl-2-(E)-butenyl 4-diphosphate (HMBPP) into a mixture of isopentenyl diphosphate (IPP) and dimethylallyl diphosphate (DMAPP). Acts in the terminal step of the DOXP/MEP pathway for isoprenoid precursor biosynthesis. The polypeptide is 4-hydroxy-3-methylbut-2-enyl diphosphate reductase (Protochlamydia amoebophila (strain UWE25)).